The primary structure comprises 67 residues: Beta-mammal toxin CeII9 (67 aa).

The LCN-type CS-alpha/beta domain maps to lysine 1–asparagine 66. 4 disulfide bridges follow: cysteine 12–cysteine 65, cysteine 16–cysteine 41, cysteine 25–cysteine 46, and cysteine 29–cysteine 48.

The protein belongs to the long (4 C-C) scorpion toxin superfamily. Sodium channel inhibitor family. Beta subfamily. Expressed by the venom gland.

It is found in the secreted. Functionally, beta toxins bind at site-4 of sodium channels and shift the voltage of activation toward more negative potentials thereby affecting sodium channel activation and promoting spontaneous and repetitive firing. This toxin is active against mammals and lethal to mice. Selectively modulates Nav1.4/SCN4A, a sodium channel present in both denervated and innervated skeletal muscle. In Centruroides elegans (Bark scorpion), this protein is Beta-mammal toxin CeII9.